Consider the following 346-residue polypeptide: Phosphoribosylformylglycinamidine cyclo-ligase (346 aa).

The protein belongs to the AIR synthase family.

The protein resides in the cytoplasm. It carries out the reaction 2-formamido-N(1)-(5-O-phospho-beta-D-ribosyl)acetamidine + ATP = 5-amino-1-(5-phospho-beta-D-ribosyl)imidazole + ADP + phosphate + H(+). Its pathway is purine metabolism; IMP biosynthesis via de novo pathway; 5-amino-1-(5-phospho-D-ribosyl)imidazole from N(2)-formyl-N(1)-(5-phospho-D-ribosyl)glycinamide: step 2/2. The chain is Phosphoribosylformylglycinamidine cyclo-ligase from Photorhabdus laumondii subsp. laumondii (strain DSM 15139 / CIP 105565 / TT01) (Photorhabdus luminescens subsp. laumondii).